Reading from the N-terminus, the 163-residue chain is uncharacterized protein (163 aa).

4 consecutive transmembrane segments (helical) span residues 19–39 (GPPS…SEGI), 63–83 (FFAD…LLGL), 87–107 (VAAV…KLRA), and 119–139 (FWGM…LIFL).

The protein belongs to the DoxX family.

The protein resides in the cell membrane. This is an uncharacterized protein from Mycobacterium tuberculosis (strain ATCC 25618 / H37Rv).